We begin with the raw amino-acid sequence, 239 residues long: MGQKVNPTGLRLGINKTWSSRWYAGPRNYADLLLEDLKIRAMIQEIPECKNADIAEVEIIRHPQRITIMIHTARPGVIIGVKGANIENIGAIIQKKLGKKVQIKIKEVKRAELRAALVAQNVARQLAGRASFRKVLKQACFNTMRSGAQGIKIRISGRLGGAEMSRTEEMKEGRVPLHTLRADIDYGFAEADTTYGKIGVKVWLYSGMMFGGEQKEDAGALLKKQRRPRTEKPAQAGRQ.

A KH type-2 domain is found at 39-109; the sequence is IRAMIQEIPE…KVQIKIKEVK (71 aa). The segment at 219-239 is disordered; it reads GALLKKQRRPRTEKPAQAGRQ.

The protein belongs to the universal ribosomal protein uS3 family. In terms of assembly, part of the 30S ribosomal subunit. Forms a tight complex with proteins S10 and S14.

Functionally, binds the lower part of the 30S subunit head. Binds mRNA in the 70S ribosome, positioning it for translation. In Treponema denticola (strain ATCC 35405 / DSM 14222 / CIP 103919 / JCM 8153 / KCTC 15104), this protein is Small ribosomal subunit protein uS3.